We begin with the raw amino-acid sequence, 113 residues long: Large ribosomal subunit protein uL22 (113 aa).

The protein belongs to the universal ribosomal protein uL22 family. In terms of assembly, part of the 50S ribosomal subunit.

Its function is as follows. This protein binds specifically to 23S rRNA; its binding is stimulated by other ribosomal proteins, e.g. L4, L17, and L20. It is important during the early stages of 50S assembly. It makes multiple contacts with different domains of the 23S rRNA in the assembled 50S subunit and ribosome. The globular domain of the protein is located near the polypeptide exit tunnel on the outside of the subunit, while an extended beta-hairpin is found that lines the wall of the exit tunnel in the center of the 70S ribosome. This is Large ribosomal subunit protein uL22 from Pelotomaculum thermopropionicum (strain DSM 13744 / JCM 10971 / SI).